The chain runs to 309 residues: 2-dehydropantoate 2-reductase (309 aa).

Residues 7–12 (GAGSIG), Arg31, and Lys74 contribute to the NADP(+) site. Residues 8-10 (AGS), Arg31, Lys74, and Cys84 each bind CoA. Residues Asn100 and Ala124 each coordinate NADP(+). Lys180 functions as the Proton donor in the catalytic mechanism. Substrate-binding positions include Lys180, Asn184, Asn188, Asn198, and 247-250 (NYNS). Position 257 (Arg257) interacts with CoA. Residue Glu262 participates in NADP(+) binding.

This sequence belongs to the ketopantoate reductase family. Homodimer.

It is found in the cytoplasm. It catalyses the reaction (R)-pantoate + NAD(+) = 2-dehydropantoate + NADH + H(+). The catalysed reaction is (R)-pantoate + NADP(+) = 2-dehydropantoate + NADPH + H(+). It participates in cofactor biosynthesis; coenzyme A biosynthesis. With respect to regulation, regulated by feedback inhibition by coenzyme A (CoA). CoA acts by competing with NAD(P)H. A disulfide bond is formed between CoA and Cys-84, which indicates an irreversible inhibition upon binding of CoA. Its function is as follows. Catalyzes the NAD(P)H-dependent reduction of ketopantoate into pantoic acid. Prefers NADH rather than NADPH as the electron donor. This is 2-dehydropantoate 2-reductase from Thermococcus kodakarensis (strain ATCC BAA-918 / JCM 12380 / KOD1) (Pyrococcus kodakaraensis (strain KOD1)).